The primary structure comprises 89 residues: Tuberculin-active protein (89 aa).

Cysteines 27 and 59 form a disulfide. Residues 61–89 (DGGSESEGKNGSQMRLIADVGPESATVAK) form a disordered region.

Its function is as follows. Tuberculin is the soluble, proteinaceous cell substance of the bacterium, to which infected animals become hypersensitive and react characteristically to dermal injections. The polypeptide is Tuberculin-active protein (Mycobacterium tuberculosis).